The sequence spans 308 residues: tRNA uridine(34) hydroxylase (308 aa).

Positions 128–222 (ADENTVVVDT…YLEEVPREQS (95 aa)) constitute a Rhodanese domain. The active-site Cysteine persulfide intermediate is the C182.

Belongs to the TrhO family.

The enzyme catalyses uridine(34) in tRNA + AH2 + O2 = 5-hydroxyuridine(34) in tRNA + A + H2O. Functionally, catalyzes oxygen-dependent 5-hydroxyuridine (ho5U) modification at position 34 in tRNAs. This chain is tRNA uridine(34) hydroxylase, found in Brucella suis biovar 1 (strain 1330).